A 216-amino-acid chain; its full sequence is Outer-membrane lipoprotein LolB (216 aa).

An N-terminal signal peptide occupies residues 1-24; it reads MNNLNYFTKISASCAALALMTLAG. Cys-25 carries N-palmitoyl cysteine lipidation. The S-diacylglycerol cysteine moiety is linked to residue Cys-25.

This sequence belongs to the LolB family. Monomer.

It is found in the cell outer membrane. Functionally, plays a critical role in the incorporation of lipoproteins in the outer membrane after they are released by the LolA protein. This chain is Outer-membrane lipoprotein LolB, found in Shewanella loihica (strain ATCC BAA-1088 / PV-4).